The primary structure comprises 346 residues: Coproporphyrin III ferrochelatase (346 aa).

The Fe-coproporphyrin III site is built by Ser-52 and Tyr-121. His-181 and Glu-264 together coordinate Fe(2+).

It belongs to the ferrochelatase family.

The protein resides in the cytoplasm. The enzyme catalyses Fe-coproporphyrin III + 2 H(+) = coproporphyrin III + Fe(2+). The protein operates within porphyrin-containing compound metabolism; protoheme biosynthesis. Its function is as follows. Involved in coproporphyrin-dependent heme b biosynthesis. Catalyzes the insertion of ferrous iron into coproporphyrin III to form Fe-coproporphyrin III. This is Coproporphyrin III ferrochelatase from Mycobacterium sp. (strain JLS).